The chain runs to 1170 residues: MGTKLKKSNNDITIFSENEYNEIVEMLRDYSNGDNLEFEVSFKNINYPNFMRITEHYINITPENKIESNNYLDISLIFPDKNVYRVSLFNQEQIGEFITKFSKASSNDISRYIVSLDPSDDIEIVYKNRGSGKLIGIDNWAITIKSTEEIPLVAGKSKISKPKITGSERIMYRYKTRYSFTINKNSRIDITDVKSSPIIWKLMTVPSNYELELELINKIDINTLESELLNVFMIIQDTKIPISKAESDTVVEEYRNLLNVRQTNNLDSRNVISVNSNHIINFIPNRYAVTDKADGERYFLFSLNSGIYLLSINLTVKKLNIPVLEKRYQNMLIDGEYIKTTGHDLFMVFDVIFAEGTDYRYDNTYSLPKRIIIINNIIDKCFGNLIPFNDYTDKHNNLELDSIKTYYKSELSNYWKNFKNRLNKSTDLFITRKLYLVPYGIDSSEIFMYADMIWKLYVYNELTPYQLDGIIYTPINSPYLIRGGIDAYDTIPMEYKWKPPSQNSIDFYIRFKKDVSGADAVYYDNSVERAEGKPYKICLLYVGLNKQGQEIPIQFKVNGVEQTANIYTKDGEATDINGNAINDNTVVEFVFDTLKIDMDDSYKWIPIRTRYDKTESVQKYHKRYGNNLQIANRIWKTITNPITEDIISSLGDPTTFNKEITLLSDFRDTKYNKQALTYYQKNTSNAAGMRAFNNWIKSNMITTYCRDGSKVLDIGCGRGGDLIKFINAGVEFYVGIDIDNNGLYVINDSANNRYKNLKKTIQNIPPMYFINADARGLFTLEAQEKILPGMPDFNKSLINKYLVGNKYDTINCQFTIHYYLSDELSWNNFCKNINNQLKDNGYLLITSFDGNLIHNKLKGKQKLSSSYTDNRGNKNIFFEINKIYSDTDKVGLGMAIDLYNSLISNPGTYIREYLVFPEFLEKSLKEKCGLELVESDLFYNIFNTYKNYFKKTYNEYGMTDVSSKKHSEIREFYLSLEGNANNDIEIDIARASFKLAMLNRYYVFRKTSTINITEPSRIVNELNNRIDLGKFIMPYFRTNNMFIDLDNVDTDINRVYRNIRNKYRTTRPHVYLIKHNINENRLEDIYLSNNKLDFSKIKNGSDPKVLLIYKSPDKQFYPLYYQNYQSMPFDLDQIYLPDKKKYLLDSDRIINDLNILINLTEKIKNIPQLS.

The N6-GMP-lysine intermediate role is filled by K292. The 324-residue stretch at 684–1007 folds into the mRNA cap 0 methyltransferase domain; sequence SNAAGMRAFN…LNRYYVFRKT (324 aa). Residue 693–694 participates in mRNA binding; the sequence is NN. S-adenosyl-L-methionine is bound by residues K697, G715, D737, and 813–815; that span reads QFT.

This sequence in the N-terminal section; belongs to the dsDNA virus mRNA guanylyltransferase family. The protein in the C-terminal section; belongs to the class I-like SAM-binding methyltransferase superfamily. mRNA cap 0 methyltransferase family.

The protein localises to the virion. It carries out the reaction a 5'-end triphospho-ribonucleoside in mRNA + H2O = a 5'-end diphospho-ribonucleoside in mRNA + phosphate + H(+). The catalysed reaction is a 5'-end diphospho-ribonucleoside in mRNA + GTP + H(+) = a 5'-end (5'-triphosphoguanosine)-ribonucleoside in mRNA + diphosphate. The enzyme catalyses a 5'-end (5'-triphosphoguanosine)-ribonucleoside in mRNA + S-adenosyl-L-methionine = a 5'-end (N(7)-methyl 5'-triphosphoguanosine)-ribonucleoside in mRNA + S-adenosyl-L-homocysteine. Its pathway is mRNA processing; mRNA capping. Its function is as follows. Responsible for methylating the 5'-cap structure of mRNAs. This chain is Probable mRNA-capping enzyme, found in Acanthamoeba polyphaga mimivirus (APMV).